The following is a 601-amino-acid chain: NAD-dependent malic enzyme 59 kDa isoform, mitochondrial (601 aa).

A mitochondrion-targeting transit peptide spans 1-18 (MWRVARSAASTFRRTRRL). Tyr129 functions as the Proton donor in the catalytic mechanism. An NAD(+)-binding site is contributed by Arg182. The Proton acceptor role is filled by Lys200. Positions 271, 272, and 295 each coordinate a divalent metal cation. 2 residues coordinate NAD(+): Asp295 and Asn444.

The protein belongs to the malic enzymes family. As to quaternary structure, heterodimer of two related subunits. Mg(2+) is required as a cofactor. It depends on Mn(2+) as a cofactor.

Its subcellular location is the mitochondrion matrix. It catalyses the reaction (S)-malate + NAD(+) = pyruvate + CO2 + NADH. This Solanum tuberosum (Potato) protein is NAD-dependent malic enzyme 59 kDa isoform, mitochondrial.